The chain runs to 366 residues: RISC-loading complex subunit TARBP2 (366 aa).

3 sufficient for interaction with PRKRA regions span residues 22 to 105 (MLAA…EPAL), 152 to 234 (SPQQ…DARD), and 287 to 366 (LGAL…AGSK). Positions 30 to 97 (TPISLLQEYG…AEVALKHLKG (68 aa)) constitute a DRBM 1 domain. The disordered stretch occupies residues 135–158 (PSAVPTRSSPMEVQPPVSPQQSEC). Phosphoserine is present on serine 152. 2 DRBM domains span residues 159-227 (NPVG…RVHT) and 293-361 (ACCS…YLKI). The tract at residues 228–366 (VPLDARDGNE…QYLKIMAGSK (139 aa)) is sufficient for interaction with DICER1.

This sequence belongs to the TARBP2 family. In terms of assembly, self-associates. Component of the RISC loading complex (RLC), or micro-RNA (miRNA) loading complex (miRLC), which is composed of DICER1, AGO2 and TARBP2. Note that the trimeric RLC/miRLC is also referred to as RISC. Interacts with EIF2AK2/PKR and inhibits its protein kinase activity. Interacts with DHX9 and PRKRA. Interacts with DICER1, AGO2, MOV10, EIF6 and RPL7A (60S ribosome subunit); they form a large RNA-induced silencing complex (RISC). Interacts with IRF7; this interaction prevents IRF7 phosphorylation and activation.

The protein localises to the cytoplasm. Its subcellular location is the perinuclear region. It localises to the nucleus. In terms of biological role, required for formation of the RNA induced silencing complex (RISC). Component of the RISC loading complex (RLC), also known as the micro-RNA (miRNA) loading complex (miRLC), which is composed of DICER1, AGO2 and TARBP2. Within the RLC/miRLC, DICER1 and TARBP2 are required to process precursor miRNAs (pre-miRNAs) to mature miRNAs and then load them onto AGO2. AGO2 bound to the mature miRNA constitutes the minimal RISC and may subsequently dissociate from DICER1 and TARBP2. May also play a role in the production of short interfering RNAs (siRNAs) from double-stranded RNA (dsRNA) by DICER1. Binds in vitro to the PRM1 3'-UTR. Seems to act as a repressor of translation. For some pre-miRNA substrates, may also alter the choice of cleavage site by DICER1. Negatively regulates IRF7-mediated IFN-beta signaling triggered by viral infection by inhibiting the phosphorylation of IRF7 and promoting its 'Lys'-48-linked ubiquitination and degradation. The protein is RISC-loading complex subunit TARBP2 of Bos taurus (Bovine).